The sequence spans 179 residues: Pyridoxal 5'-phosphate synthase subunit PdxT (179 aa).

L-glutamine is bound at residue 48–50 (GES). The Nucleophile role is filled by C79. Residues R101 and 127-128 (IR) each bind L-glutamine. Catalysis depends on charge relay system residues H163 and E165.

The protein belongs to the glutaminase PdxT/SNO family. As to quaternary structure, in the presence of PdxS, forms a dodecamer of heterodimers. Only shows activity in the heterodimer.

The catalysed reaction is aldehydo-D-ribose 5-phosphate + D-glyceraldehyde 3-phosphate + L-glutamine = pyridoxal 5'-phosphate + L-glutamate + phosphate + 3 H2O + H(+). It carries out the reaction L-glutamine + H2O = L-glutamate + NH4(+). The protein operates within cofactor biosynthesis; pyridoxal 5'-phosphate biosynthesis. Functionally, catalyzes the hydrolysis of glutamine to glutamate and ammonia as part of the biosynthesis of pyridoxal 5'-phosphate. The resulting ammonia molecule is channeled to the active site of PdxS. This chain is Pyridoxal 5'-phosphate synthase subunit PdxT, found in Francisella tularensis subsp. holarctica (strain FTNF002-00 / FTA).